Consider the following 449-residue polypeptide: Ktr system potassium uptake protein D (449 aa).

The next 10 helical transmembrane spans lie at 17-37 (LIAL…SLPA), 46-66 (TFID…LTVV), 75-95 (IGIF…MTLG), 133-153 (VLFL…TYFL), 194-214 (FVQF…PVLV), 235-255 (ITTI…FALE), 297-317 (LFFI…GGGI), 355-375 (LVVT…LTIT), 380-400 (LLEL…SLGI), and 411-431 (VIMI…YLIG).

The protein belongs to the TrkH potassium transport family. Ktr (TC 2.A.38.4) subfamily. Homodimer. Part of the KtrCD complex formed by an octameric catalytic ring of KtrC and a membrane associated dimer of KtrD forming a potassium channel.

It localises to the cell membrane. Functionally, integral membrane subunit of the KtrCD potassium uptake transporter. The 2 major potassium transporter complexes KtrAB and KtrCD confer resistance to both suddenly imposed and prolonged osmotic stress. The protein is Ktr system potassium uptake protein D (ktrD) of Bacillus subtilis (strain 168).